The following is a 205-amino-acid chain: SCO2-like protein RP587 (205 aa).

Cu cation contacts are provided by C82, C86, and H172.

This sequence belongs to the SCO1/2 family.

The polypeptide is SCO2-like protein RP587 (Rickettsia prowazekii (strain Madrid E)).